The chain runs to 300 residues: Ubiquinone biosynthesis protein COQ4, mitochondrial (300 aa).

His173, Asp174, His177, and Glu189 together coordinate Zn(2+).

Belongs to the COQ4 family. As to quaternary structure, component of a multi-subunit COQ enzyme complex, composed of at least COQ3, COQ4, COQ5, COQ6, COQ7 and COQ9. The cofactor is Zn(2+).

It is found in the mitochondrion inner membrane. It carries out the reaction a 4-hydroxy-3-methoxy-5-(all-trans-polyprenyl)benzoate + H(+) = a 2-methoxy-6-(all-trans-polyprenyl)phenol + CO2. The protein operates within cofactor biosynthesis; ubiquinone biosynthesis. In terms of biological role, lyase that catalyzes the C1-decarboxylation of 4-hydroxy-3-methoxy-5-(all-trans-polyprenyl)benzoic acid into 2-methoxy-6-(all-trans-polyprenyl)phenol during ubiquinone biosynthesis. The polypeptide is Ubiquinone biosynthesis protein COQ4, mitochondrial (Cryptococcus neoformans var. neoformans serotype D (strain B-3501A) (Filobasidiella neoformans)).